Here is a 226-residue protein sequence, read N- to C-terminus: Protein-L-isoaspartate(D-aspartate) O-methyltransferase (226 aa).

S-adenosyl-L-homocysteine-binding positions include 57–60, His65, Ser89, 115–116, 147–148, and Thr222; these read VTIS, EH, and DG. Residue Ser60 is part of the active site.

This sequence belongs to the methyltransferase superfamily. L-isoaspartyl/D-aspartyl protein methyltransferase family. In terms of assembly, monomer.

Its subcellular location is the cytoplasm. The protein resides in the cytosol. It carries out the reaction [protein]-L-isoaspartate + S-adenosyl-L-methionine = [protein]-L-isoaspartate alpha-methyl ester + S-adenosyl-L-homocysteine. Initiates the repair of damaged proteins by catalyzing methyl esterification of L-isoaspartyl and D-aspartyl residues produced by spontaneous isomerization and racemization of L-aspartyl and L-asparaginyl residues in aging peptides and proteins. In Drosophila melanogaster (Fruit fly), this protein is Protein-L-isoaspartate(D-aspartate) O-methyltransferase (Pcmt).